Here is a 206-residue protein sequence, read N- to C-terminus: 7-methyl-GTP pyrophosphatase (206 aa).

Aspartate 82 acts as the Proton acceptor in catalysis.

It belongs to the Maf family. YceF subfamily. The cofactor is a divalent metal cation.

It is found in the cytoplasm. It carries out the reaction N(7)-methyl-GTP + H2O = N(7)-methyl-GMP + diphosphate + H(+). In terms of biological role, nucleoside triphosphate pyrophosphatase that hydrolyzes 7-methyl-GTP (m(7)GTP). May have a dual role in cell division arrest and in preventing the incorporation of modified nucleotides into cellular nucleic acids. The chain is 7-methyl-GTP pyrophosphatase from Shewanella denitrificans (strain OS217 / ATCC BAA-1090 / DSM 15013).